The chain runs to 397 residues: Serpin B10 (397 aa).

The Nuclear localization signal motif lies at 74–77 (KKRK).

It belongs to the serpin family. Ov-serpin subfamily.

It localises to the nucleus. The protein localises to the cytoplasm. Functionally, protease inhibitor that may play a role in the regulation of protease activities during hematopoiesis and apoptosis induced by TNF. May regulate protease activities in the cytoplasm and in the nucleus. The protein is Serpin B10 (SERPINB10) of Plecturocebus moloch (Dusky titi monkey).